Consider the following 670-residue polypeptide: MARITILPDILCNQIAAGEVVERPAAVAKELLENSIDAGARRISLSIADGGRKEIRVVDNGSGMHPDDALLALERHATSKIRSIEDLQAIGSLGFRGEALPSIAAVSRFELVTREPDAVAGTFIRVEGGVVREVRETGSPAGTRITVRDLFYNVPARRKFLRAADTETAYICDQFQRLAMAHHAVHFQLINRERTQYDFPGAASPEERAGQVLGAETLKRAIPFCVENASARLRGMVGTPDLQRANSHSLFVFVNGRPVWDRAVNRAILAAFESLIPRGKFPVAVLFLELDPLHVDVNVHPTKREVRFKHPGGVIDTVRGAIRDALCHLRPLHGSAAAAPRPFSETADQRAFRDSLVREGQLSFDRGRPLSRPPGFPSERWRERHRPDAEPPYPLLREPAPTENPRREAGSPPAAPADSLFDEGAAPQPDNPDTDFFAEPKRAAGGPASTHAPVTVDTAAFADAFQAFEAATHLHAGDVPALAELPVIGQLANTYILLEAPDGLILIDQHAAHERIIFDALSFPAGGPARQRLIRPAVIDLPPRDAAMLRRWLPLLEEIGVEIESFGGDSFVVHAVPAPLGECPPEGLVRELLASAIEGDDAPRWNVLGRLAKTAACHRAVRAGQRLRPEEIRLLLEGLDRTRFASTCPHGRPVWYKMTLSDVARLFQRT.

Residues 363–451 form a disordered region; the sequence is SFDRGRPLSR…RAAGGPASTH (89 aa). Residues 379 to 389 are compositionally biased toward basic and acidic residues; sequence ERWRERHRPDA.

This sequence belongs to the DNA mismatch repair MutL/HexB family.

In terms of biological role, this protein is involved in the repair of mismatches in DNA. It is required for dam-dependent methyl-directed DNA mismatch repair. May act as a 'molecular matchmaker', a protein that promotes the formation of a stable complex between two or more DNA-binding proteins in an ATP-dependent manner without itself being part of a final effector complex. This is DNA mismatch repair protein MutL from Syntrophobacter fumaroxidans (strain DSM 10017 / MPOB).